Here is a 616-residue protein sequence, read N- to C-terminus: MGKIIGIDLGTTNSCVAVMEGGEPVVITNSEGARTTPSVVSFQADGERLVGQVAKRQSITNPDKTIISIKRHMGTSYKVDIDGKNYSPQEISAMVLQKIKADAESYLGESVTQAVITVPAYFNDSERQATKDAGKIAGLEVLRIINEPTAAALAYGLDKMDSNHKILVYDLGGGTFDVSILELGDGVFEVLSTNGDTKLGGDDFDQKVMDYIAETFKAENGIDLRQDKMALQRLKEAAEKAKIELSSSMQTNINLPFITADATGPKHIDLNLTRAKFNEITNDLVQRSIEPMKKALSDAAISIDEIEKIILVGGSTRIPAVVEAVKNFTGKDPSKGVNPDECVAVGAAVQAGVLTGEVKDVLLLDVTPLTLGIETAGGIATPLIERNTTIPTKKSQIFSTAADSQTSVEINVVQGERQMAMDNKSLGRFTLSGIAPAPRGIPQIEVTFDIDANGIVKVSALDKGTGKEANITITASTNLNDDEIDKAVKEAEKFAEEDKKRKEKVETLNNADQLIYQTEKALTELGDKVSAEDKAKVTEKLEALKAIKDGEDLEAIKKATEELTQEFYAVSSKVYAAAGGDPSQAGGFDPNAAGGAQQEPHDDNVVDADFKVDDDK.

Threonine 175 carries the phosphothreonine; by autocatalysis modification. Positions 579–616 are disordered; sequence GGDPSQAGGFDPNAAGGAQQEPHDDNVVDADFKVDDDK. The span at 599 to 616 shows a compositional bias: basic and acidic residues; sequence EPHDDNVVDADFKVDDDK.

It belongs to the heat shock protein 70 family.

In terms of biological role, acts as a chaperone. The polypeptide is Chaperone protein DnaK (Clostridium botulinum (strain Eklund 17B / Type B)).